The chain runs to 40 residues: Dolichyl-diphosphooligosaccharide--protein glycosyltransferase subunit 4 (40 aa).

Residues M1 to D4 lie on the Lumenal side of the membrane. The chain crosses the membrane as a helical span at residues V5–Y25. Topologically, residues H26–K40 are cytoplasmic.

It belongs to the OST4 family. Component of the oligosaccharyltransferase (OST) complex.

Its subcellular location is the endoplasmic reticulum membrane. Subunit of the oligosaccharyl transferase (OST) complex that catalyzes the initial transfer of a defined glycan (Glc(3)Man(9)GlcNAc(2) in eukaryotes) from the lipid carrier dolichol-pyrophosphate to an asparagine residue within an Asn-X-Ser/Thr consensus motif in nascent polypeptide chains, the first step in protein N-glycosylation. N-glycosylation occurs cotranslationally and the complex associates with the Sec61 complex at the channel-forming translocon complex that mediates protein translocation across the endoplasmic reticulum (ER). All subunits are required for a maximal enzyme activity. In Drosophila erecta (Fruit fly), this protein is Dolichyl-diphosphooligosaccharide--protein glycosyltransferase subunit 4.